Here is a 159-residue protein sequence, read N- to C-terminus: GDP-mannose mannosyl hydrolase (159 aa).

Substrate-binding positions include 2–3 (FL), Phe-8, and Arg-36. The region spanning 13-153 (RSTPLVSLDF…SRAYFLAEKR (141 aa)) is the Nudix hydrolase domain. Mg(2+) is bound by residues Gly-49, Glu-69, and Gln-122. The Nudix box motif lies at 50 to 71 (GRVQKDETLEAAFERLTMAELG).

Homodimer. The cofactor is Mg(2+).

The catalysed reaction is GDP-alpha-D-mannose + H2O = D-mannose + GDP + H(+). Its function is as follows. Hydrolyzes both GDP-mannose and GDP-glucose. Could participate in the regulation of cell wall biosynthesis by influencing the concentration of GDP-mannose or GDP-glucose in the cell. Might also be involved in the biosynthesis of the slime polysaccharide colanic acid. In Escherichia coli (strain K12), this protein is GDP-mannose mannosyl hydrolase.